A 453-amino-acid polypeptide reads, in one-letter code: Macrophage scavenger receptor types I and II (453 aa).

At 1–50 the chain is on the cytoplasmic side; the sequence is MAQWDDFPDQQEDTDSCTESVKFDARSVTALLPPHPKNGPTLQERMKSYK. Ser-27 is subject to Phosphoserine. The helical; Signal-anchor for type II membrane protein transmembrane segment at 51-76 threads the bilayer; that stretch reads TALITLYLIVFVVLVPIIGIVAAQLL. Residues 77–108 form a spacer region; sequence KWETKNCTVGSVNADISPSPEGKGNGSEDEMR. The Extracellular portion of the chain corresponds to 77 to 453; that stretch reads KWETKNCTVG…DEDAGVTCTT (377 aa). 7 N-linked (GlcNAc...) asparagine glycosylation sites follow: Asn-82, Asn-101, Asn-142, Asn-183, Asn-220, Asn-248, and Asn-266. Residues 194-255 adopt a coiled-coil conformation; sequence ETLNGRVQEN…LNNITNDLRL (62 aa). Disordered regions lie at residues 267–295 and 313–349; these read ITLL…PGFP and PGVR…QRQS. Residues 272 to 343 enclose the Collagen-like domain; the sequence is GPPGPPGEKG…KGQKGEKGSG (72 aa). Residues 352-452 form the SRCR domain; the sequence is VRLVGGSGPH…HDEDAGVTCT (101 aa). Intrachain disulfides connect Cys-377/Cys-441, Cys-390/Cys-451, and Cys-421/Cys-431.

As to quaternary structure, homotrimer. Interacts with MYO18A.

It localises to the membrane. Membrane glycoproteins implicated in the pathologic deposition of cholesterol in arterial walls during atherogenesis. Two types of receptor subunits exist. These receptors mediate the endocytosis of a diverse group of macromolecules, including modified low density lipoproteins (LDL). The polypeptide is Macrophage scavenger receptor types I and II (MSR1) (Bos taurus (Bovine)).